Consider the following 754-residue polypeptide: Ribonucleoside-diphosphate reductase subunit alpha (754 aa).

An ATP-cone domain is found at 4–93; the sequence is INVIKSSGVS…MFALRKHVYG (90 aa). Substrate-binding positions include threonine 206, 221 to 222, glycine 250, 435 to 439, and 615 to 619; these read SC, NLCCE, and PCESS. An intrachain disulfide couples cysteine 222 to cysteine 457. Asparagine 435 (proton acceptor) is an active-site residue. The active-site Cysteine radical intermediate is cysteine 437. Residue glutamate 439 is the Proton acceptor of the active site. Residues 621-641 are disordered; the sequence is QVSNSTNGYEPPRGPVSVKES.

This sequence belongs to the ribonucleoside diphosphate reductase large chain family. As to quaternary structure, heterodimer of a large and a small subunit.

It catalyses the reaction a 2'-deoxyribonucleoside 5'-diphosphate + [thioredoxin]-disulfide + H2O = a ribonucleoside 5'-diphosphate + [thioredoxin]-dithiol. With respect to regulation, under complex allosteric control mediated by deoxynucleoside triphosphates and ATP binding. The type of nucleotide bound at the specificity site determines substrate preference. It seems probable that ATP makes the enzyme reduce CDP and UDP, dGTP favors ADP reduction and dTTP favors GDP reduction. Provides the precursors necessary for DNA synthesis. Catalyzes the biosynthesis of deoxyribonucleotides from the corresponding ribonucleotides. The protein is Ribonucleoside-diphosphate reductase subunit alpha (NRDA) of Escherichia coli (Bacteriophage T4).